The sequence spans 285 residues: Eukaryotic translation initiation factor 3 subunit F-2 (285 aa).

The region spanning 11–145 (VFLKPLVLFQ…TRLYCAVEMG (135 aa)) is the MPN domain.

Belongs to the eIF-3 subunit F family. Component of the eukaryotic translation initiation factor 3 (eIF-3) complex. The eIF-3 complex interacts with pix.

It is found in the cytoplasm. Functionally, component of the eukaryotic translation initiation factor 3 (eIF-3) complex, which is involved in protein synthesis of a specialized repertoire of mRNAs and, together with other initiation factors, stimulates binding of mRNA and methionyl-tRNAi to the 40S ribosome. The eIF-3 complex specifically targets and initiates translation of a subset of mRNAs involved in cell proliferation. The chain is Eukaryotic translation initiation factor 3 subunit F-2 from Drosophila sechellia (Fruit fly).